Here is a 174-residue protein sequence, read N- to C-terminus: uncharacterized protein (174 aa).

This is an uncharacterized protein from Bacillus subtilis (strain 168).